Consider the following 328-residue polypeptide: Porphobilinogen deaminase (328 aa).

Cys245 carries the S-(dipyrrolylmethanemethyl)cysteine modification.

The protein belongs to the HMBS family. Monomer. Dipyrromethane is required as a cofactor.

It carries out the reaction 4 porphobilinogen + H2O = hydroxymethylbilane + 4 NH4(+). It functions in the pathway porphyrin-containing compound metabolism; protoporphyrin-IX biosynthesis; coproporphyrinogen-III from 5-aminolevulinate: step 2/4. The protein operates within porphyrin-containing compound metabolism; chlorophyll biosynthesis. Functionally, tetrapolymerization of the monopyrrole PBG into the hydroxymethylbilane pre-uroporphyrinogen in several discrete steps. The polypeptide is Porphobilinogen deaminase (Gloeobacter violaceus (strain ATCC 29082 / PCC 7421)).